The primary structure comprises 847 residues: Vacuolar membrane protease (847 aa).

Residues 1-17 (MQFGKSLLKHVYTRTFK) are Cytoplasmic-facing. A helical transmembrane segment spans residues 18 to 38 (SSLTCSIFAFTLLMIFFVLDW). At 39–348 (KRMNVYPRLD…GSYWQINLNL (310 aa)) the chain is on the vacuolar side. Positions 146 and 158 each coordinate Zn(2+). Glu190 acts as the Proton acceptor in catalysis. Glu191 contributes to the Zn(2+) binding site. Residue Asn208 is glycosylated (N-linked (GlcNAc...) asparagine). Residue Glu216 participates in Zn(2+) binding. A glycan (N-linked (GlcNAc...) asparagine) is linked at Asn274. His291 contributes to the Zn(2+) binding site. A helical membrane pass occupies residues 349–369 (HLFLNVVFLIACPAILFMCLF). Residues 370-381 (RFPSLYAQLKKP) are Cytoplasmic-facing. A helical membrane pass occupies residues 382–402 (CYLICFTLSSLFVLIFDYVVV). The Vacuolar portion of the chain corresponds to 403-415 (QSLTKLNPYVIHS). The helical transmembrane segment at 416 to 436 (SPDAVLAFFFLTNLLGLVYSF) threads the bilayer. The Cytoplasmic segment spans residues 437–454 (RYVATHSRMSNEELSCIE). A helical transmembrane segment spans residues 455–475 (IVLIWYVSMFWYISLLIATLT). Residues 476 to 482 (SIVRGLG) lie on the Vacuolar side of the membrane. A helical membrane pass occupies residues 483-503 (SLYFVNFGFFCSFFCCILTLI). The Cytoplasmic portion of the chain corresponds to 504–560 (RVRYFVDRMVTINRPANPEQMPLVQSTSGNAYGTSRYPQHRLKAVVSKSASVKLNDN). A helical transmembrane segment spans residues 561 to 581 (LWSVLFFSCLVPLPLFTCYNL). Residues 582–605 (LSEVFIPAVHQSLIDGPYSNTCYK) are Vacuolar-facing. The chain crosses the membrane as a helical span at residues 606–626 (FAVILVFMAIINSSPFVFRAL). At 627–630 (SKKS) the chain is on the cytoplasmic side. A helical membrane pass occupies residues 631-651 (SAILLMLWVSLLFNILRAEPF). The Vacuolar segment spans residues 652-847 (NEKAPIKFRV…LLKMSKTHVM (196 aa)). N-linked (GlcNAc...) asparagine glycans are attached at residues Asn726, Asn734, Asn800, and Asn834.

The protein belongs to the peptidase M28 family. Zn(2+) is required as a cofactor.

It is found in the vacuole membrane. In terms of biological role, may be involved in vacuolar sorting and osmoregulation. The protein is Vacuolar membrane protease of Schizosaccharomyces japonicus (strain yFS275 / FY16936) (Fission yeast).